The sequence spans 109 residues: Parvalbumin beta 2 (109 aa).

Ala2 is subject to N-acetylalanine. 2 EF-hand domains span residues 39–74 (KSPA…FSAG) and 78–109 (LSDA…MIKA). Residues Asp52, Asp54, Ser56, Phe58, Glu60, Glu63, Asp91, Asp93, Asp95, Lys97, and Glu102 each coordinate Ca(2+).

It belongs to the parvalbumin family. As to quaternary structure, monomer.

Functionally, in muscle, parvalbumin is thought to be involved in relaxation after contraction. It binds two calcium ions. The polypeptide is Parvalbumin beta 2 (Gadus morhua (Atlantic cod)).